The chain runs to 323 residues: o-succinylbenzoate synthase (323 aa).

Residue Lys134 is the Proton donor of the active site. 3 residues coordinate Mg(2+): Asp162, Glu191, and Asp214. The active-site Proton acceptor is Lys236.

Belongs to the mandelate racemase/muconate lactonizing enzyme family. MenC type 1 subfamily. A divalent metal cation is required as a cofactor.

It catalyses the reaction (1R,6R)-6-hydroxy-2-succinyl-cyclohexa-2,4-diene-1-carboxylate = 2-succinylbenzoate + H2O. The protein operates within quinol/quinone metabolism; 1,4-dihydroxy-2-naphthoate biosynthesis; 1,4-dihydroxy-2-naphthoate from chorismate: step 4/7. It functions in the pathway quinol/quinone metabolism; menaquinone biosynthesis. Its function is as follows. Converts 2-succinyl-6-hydroxy-2,4-cyclohexadiene-1-carboxylate (SHCHC) to 2-succinylbenzoate (OSB). This chain is o-succinylbenzoate synthase, found in Pectobacterium atrosepticum (strain SCRI 1043 / ATCC BAA-672) (Erwinia carotovora subsp. atroseptica).